We begin with the raw amino-acid sequence, 650 residues long: Primary amine oxidase 1 (650 aa).

The N-terminal stretch at 1–19 is a signal peptide; it reads MNTSILAILFLIQCVFTLG. 4 N-linked (GlcNAc...) asparagine glycosylation sites follow: asparagine 2, asparagine 34, asparagine 62, and asparagine 149. Cysteine 155 and cysteine 176 are oxidised to a cystine. N-linked (GlcNAc...) asparagine glycosylation is present at asparagine 235. 308-319 contacts substrate; sequence FMDIGEFGFGRS. The active-site Proton acceptor is aspartate 310. Residues cysteine 329 and cysteine 355 are joined by a disulfide bond. Substrate is bound at residue 395–400; that stretch reads LGNYDY. The active-site Schiff-base intermediate with substrate; via topaquinone is tyrosine 398. The residue at position 398 (tyrosine 398) is a 2',4',5'-topaquinone. Histidine 453 and histidine 455 together coordinate Cu cation. Aspartate 462 and aspartate 464 together coordinate Mn(2+). Residue asparagine 486 is glycosylated (N-linked (GlcNAc...) asparagine). Residues aspartate 607 and isoleucine 608 each coordinate Mn(2+). Histidine 618 provides a ligand contact to Cu cation.

This sequence belongs to the copper/topaquinone oxidase family. In terms of assembly, homodimer. The cofactor is L-topaquinone. Cu cation serves as cofactor. It depends on Zn(2+) as a cofactor. Requires Mn(2+) as cofactor. Topaquinone (TPQ) is generated by copper-dependent autoxidation of a specific tyrosyl residue. In terms of tissue distribution, expressed in the vascular tissues at the division/differentiation transition zone.

Its subcellular location is the secreted. The enzyme catalyses a primary methyl amine + O2 + H2O = an aldehyde + H2O2 + NH4(+). Repressed by semi-carbazide, a specific and irreversible inhibitor of copper amine oxidases. In terms of biological role, oxidizes preferentially the aliphatic diamine putrescine with production of the corresponding aldehyde, ammonia and hydrogen peroxide. May be involved in the regulation of developmental programmed cell death (PCD) in both vascular tissue and the root cap. Required for jasmonic acid-(MeJA) mediated early protoxylem differentiation associated with putrescine levels reduction and H(2)O(2) accumulation in roots. The polypeptide is Primary amine oxidase 1 (Arabidopsis thaliana (Mouse-ear cress)).